We begin with the raw amino-acid sequence, 36 residues long: Photosystem I reaction center subunit VIII (36 aa).

A helical membrane pass occupies residues 8–28 (SVLVPLVGLVFPAIAMASLFL).

It belongs to the PsaI family.

Its subcellular location is the plastid. The protein resides in the chloroplast thylakoid membrane. In terms of biological role, may help in the organization of the PsaL subunit. This Helianthus annuus (Common sunflower) protein is Photosystem I reaction center subunit VIII.